The chain runs to 39 residues: Potassium channel toxin alpha-KTx 2.2 (39 aa).

Disulfide bonds link C7–C29, C13–C34, and C17–C36. The tract at residues 37–39 (YPH) is interaction with Kv1.3 channels.

This sequence belongs to the short scorpion toxin superfamily. Potassium channel inhibitor family. Alpha-KTx 02 subfamily. Expressed by the venom gland.

The protein resides in the secreted. Potent inhibitor of voltage-gated potassium channels such as Kv1.1/KCNA1 (IC(50)=0.144 nM), Kv1.2/KCNA2 (IC(50)=0.675 nM), Kv1.3/KCNA3 (IC(50)=0.23 nM) and Shaker (Kd=160 nM). Suppresses expression of the Kv1.3/KCNA3 channel in lipopolysaccharide (LPS)-stimulated mouse macrophages. Down-regulates secretion of nitric oxide (NO) and inflammatory cytokines, such as TNF-alpha/TNF, IL-1beta/IL1B and IL6, in LPS-stimulated mouse macrophages in a manner dependent on Kv1.3/KCNA3 channel blockage. Reduces activation of MAPK and NF-kappa-B signaling pathways in LPS-stimulated mouse macrophages. Modulates intracellular Ca(2+) signaling in human PMA/ionomycin-triggered T-cells. Interferes with the activation of the MAPK, NF-kappa-B and NFATc1 pathways in human PMA/ionomycin-triggered T-cells. Reduces proliferation of human PMA/ionomycin-triggered T-cells. Down-regulates secretion of cytokines, such as TNF-alpha/TNF and IL2, in human PMA/ionomycin-triggered T-cells. The sequence is that of Potassium channel toxin alpha-KTx 2.2 from Centruroides margaritatus (Central American bark Scorpion).